A 251-amino-acid chain; its full sequence is Triosephosphate isomerase (251 aa).

9–11 (NWK) is a substrate binding site. The active-site Electrophile is the H95. The Proton acceptor role is filled by E167. Residues G173, S212, and 233–234 (GG) contribute to the substrate site.

It belongs to the triosephosphate isomerase family. Homodimer.

It localises to the cytoplasm. The enzyme catalyses D-glyceraldehyde 3-phosphate = dihydroxyacetone phosphate. It functions in the pathway carbohydrate biosynthesis; gluconeogenesis. The protein operates within carbohydrate degradation; glycolysis; D-glyceraldehyde 3-phosphate from glycerone phosphate: step 1/1. Functionally, involved in the gluconeogenesis. Catalyzes stereospecifically the conversion of dihydroxyacetone phosphate (DHAP) to D-glyceraldehyde-3-phosphate (G3P). The polypeptide is Triosephosphate isomerase (Pseudomonas fluorescens (strain Pf0-1)).